The chain runs to 357 residues: tRNA N6-adenosine threonylcarbamoyltransferase (357 aa).

Residues histidine 115 and histidine 119 each contribute to the Fe cation site. Substrate is bound by residues 137 to 141 (LASGG), aspartate 170, glycine 183, and asparagine 281. Aspartate 309 is a Fe cation binding site.

It belongs to the KAE1 / TsaD family. Fe(2+) serves as cofactor.

It localises to the cytoplasm. It carries out the reaction L-threonylcarbamoyladenylate + adenosine(37) in tRNA = N(6)-L-threonylcarbamoyladenosine(37) in tRNA + AMP + H(+). Required for the formation of a threonylcarbamoyl group on adenosine at position 37 (t(6)A37) in tRNAs that read codons beginning with adenine. Is involved in the transfer of the threonylcarbamoyl moiety of threonylcarbamoyl-AMP (TC-AMP) to the N6 group of A37, together with TsaE and TsaB. TsaD likely plays a direct catalytic role in this reaction. The sequence is that of tRNA N6-adenosine threonylcarbamoyltransferase from Nitrobacter hamburgensis (strain DSM 10229 / NCIMB 13809 / X14).